Consider the following 440-residue polypeptide: MENIQKLIARYPLVEDLVALKETTWFNPGATSLAQGLPYVGLTEQDVNAAHDRLARFAPYLAKAFPQTAAAGGMIESDVVAIPAMQKRLEKEYGQTIDGEMLLKKDSHLAISGSIKARGGIYEVLTHAEKLALEAGLLTTDDDYSVLLSPEFKQFFSQYSIAVGSTGNLGLSIGIMSACIGFKVTVHMSADARAWKKAKLRSHGVTVVEYEDDYGVAVEQGRKAAQSDPNCFFIDDENSRTLFLGYAVAGQRLKAQFAQQGRVVDASHPLFVYLPCGVGGGPGGVAFGLKLAFGDNVHCFFAEPTHSPCMLLGVYTGLHDAISVQDIGIDNLTAADGLAVGRASGFVGRAMERLLDGLYTLDDQTMYDMLGWLAQEEGIRLEPSALAGMAGPQRICAAAAYQQRHGFSQTQLGNATHLVWATGGGMVPEDEMEQYLAKGR.

Lys-116 is subject to N6-(pyridoxal phosphate)lysine.

The protein belongs to the serine/threonine dehydratase family. DsdA subfamily. Monomer. Requires pyridoxal 5'-phosphate as cofactor.

It carries out the reaction D-serine = pyruvate + NH4(+). The sequence is that of D-serine dehydratase from Salmonella enteritidis PT4 (strain P125109).